The primary structure comprises 295 residues: Mediator of RNA polymerase II transcription subunit 27 (295 aa).

It belongs to the Mediator complex subunit 27 family. As to quaternary structure, component of the Mediator complex.

Its subcellular location is the nucleus. Component of the Mediator complex, a coactivator involved in the regulated transcription of nearly all RNA polymerase II-dependent genes. Mediator functions as a bridge to convey information from gene-specific regulatory proteins to the basal RNA polymerase II transcription machinery. Mediator is recruited to promoters by direct interactions with regulatory proteins and serves as a scaffold for the assembly of a functional preinitiation complex with RNA polymerase II and the general transcription factors. This is Mediator of RNA polymerase II transcription subunit 27 (MED27) from Aedes aegypti (Yellowfever mosquito).